The primary structure comprises 326 residues: ATP synthase gamma chain (326 aa).

Belongs to the ATPase gamma chain family. As to quaternary structure, F-type ATPases have 2 components, CF(1) - the catalytic core - and CF(0) - the membrane proton channel. CF(1) has five subunits: alpha(3), beta(3), gamma(1), delta(1), epsilon(1). CF(0) has three main subunits: a, b and c.

Its subcellular location is the cell membrane. Functionally, produces ATP from ADP in the presence of a proton gradient across the membrane. The gamma chain is believed to be important in regulating ATPase activity and the flow of protons through the CF(0) complex. The sequence is that of ATP synthase gamma chain from Corynebacterium jeikeium (strain K411).